The chain runs to 121 residues: Large ribosomal subunit protein uL24 (121 aa).

Belongs to the universal ribosomal protein uL24 family. In terms of assembly, part of the 50S ribosomal subunit.

Its function is as follows. One of two assembly initiator proteins, it binds directly to the 5'-end of the 23S rRNA, where it nucleates assembly of the 50S subunit. Functionally, located at the polypeptide exit tunnel on the outside of the subunit. The protein is Large ribosomal subunit protein uL24 of Pyrococcus horikoshii (strain ATCC 700860 / DSM 12428 / JCM 9974 / NBRC 100139 / OT-3).